The sequence spans 406 residues: Aminomethyltransferase, mitochondrial (406 aa).

The transit peptide at 1–29 directs the protein to the mitochondrion; it reads MRGGLWQLGQSITRRLAQADKKTIGRRCF. Substrate-binding residues include Glu234, Arg265, and Tyr403.

The protein belongs to the GcvT family. The glycine cleavage system is composed of four proteins: P, T, L and H.

Its subcellular location is the mitochondrion. The catalysed reaction is N(6)-[(R)-S(8)-aminomethyldihydrolipoyl]-L-lysyl-[protein] + (6S)-5,6,7,8-tetrahydrofolate = N(6)-[(R)-dihydrolipoyl]-L-lysyl-[protein] + (6R)-5,10-methylene-5,6,7,8-tetrahydrofolate + NH4(+). The glycine cleavage system catalyzes the degradation of glycine. The polypeptide is Aminomethyltransferase, mitochondrial (GDCST) (Solanum tuberosum (Potato)).